We begin with the raw amino-acid sequence, 91 residues long: Putative membrane protein insertion efficiency factor (91 aa).

The protein belongs to the UPF0161 family.

It localises to the cell inner membrane. Could be involved in insertion of integral membrane proteins into the membrane. The protein is Putative membrane protein insertion efficiency factor of Saccharophagus degradans (strain 2-40 / ATCC 43961 / DSM 17024).